The chain runs to 168 residues: G/U mismatch-specific DNA glycosylase (168 aa).

It belongs to the uracil-DNA glycosylase (UDG) superfamily. TDG/mug family. In terms of assembly, binds DNA as a monomer.

The protein resides in the cytoplasm. It carries out the reaction Specifically hydrolyzes mismatched double-stranded DNA and polynucleotides, releasing free uracil.. Functionally, excises ethenocytosine and uracil, which can arise by alkylation or deamination of cytosine, respectively, from the corresponding mispairs with guanine in ds-DNA. It is capable of hydrolyzing the carbon-nitrogen bond between the sugar-phosphate backbone of the DNA and the mispaired base. The complementary strand guanine functions in substrate recognition. Required for DNA damage lesion repair in stationary-phase cells. This is G/U mismatch-specific DNA glycosylase from Cronobacter sakazakii (strain ATCC BAA-894) (Enterobacter sakazakii).